The sequence spans 119 residues: Large ribosomal subunit protein uL18 (119 aa).

The protein belongs to the universal ribosomal protein uL18 family. As to quaternary structure, part of the 50S ribosomal subunit; part of the 5S rRNA/L5/L18/L25 subcomplex. Contacts the 5S and 23S rRNAs.

Functionally, this is one of the proteins that bind and probably mediate the attachment of the 5S RNA into the large ribosomal subunit, where it forms part of the central protuberance. This chain is Large ribosomal subunit protein uL18, found in Xanthomonas campestris pv. campestris (strain 8004).